Here is a 418-residue protein sequence, read N- to C-terminus: MSLLVIGINHTSASVDLREKVAFSPEKLTKALDELKNSDAIQSGVILSTCNRTEIYCEVKHGISSGYVINWLAEFHHVALEILMPSIYIHEEQAAVKHLMRVSCGLDSLVLGEPQILGQVKKAFADAREHNAVEGTIEKLFQQDFSVAKRVRTETNIGGNAVSVAYAACTLARQIFESLSDSTVLLVGAGETIELVAKHLDDSGCKRLIVANRTRERAMGLAEQFNAEVISLPEIPEHLPKADIIISSTASPLPIIGKGMVESALKLRKHQPMLFVDIAVPRDIEGEVAELNDAYLYSVDDLQSIIDHNIEQRKIEAIQAEAIVSEESAEFMTWIRSRQAVNSIRQYRENSEAMRIELLQKSMQALASGQNPEKVLAELSNKLTNKLIHAPTLAMQQAAKNGETEKLTVIRTTIGLDN.

Substrate-binding positions include 49 to 52 (TCNR), Ser108, 113 to 115 (EPQ), and Gln119. Cys50 (nucleophile) is an active-site residue. Position 188–193 (188–193 (GAGETI)) interacts with NADP(+).

This sequence belongs to the glutamyl-tRNA reductase family. In terms of assembly, homodimer.

The enzyme catalyses (S)-4-amino-5-oxopentanoate + tRNA(Glu) + NADP(+) = L-glutamyl-tRNA(Glu) + NADPH + H(+). It participates in porphyrin-containing compound metabolism; protoporphyrin-IX biosynthesis; 5-aminolevulinate from L-glutamyl-tRNA(Glu): step 1/2. In terms of biological role, catalyzes the NADPH-dependent reduction of glutamyl-tRNA(Glu) to glutamate 1-semialdehyde (GSA). This chain is Glutamyl-tRNA reductase, found in Aliivibrio fischeri (strain MJ11) (Vibrio fischeri).